The sequence spans 201 residues: Peptidyl-tRNA hydrolase (201 aa).

Residue tyrosine 14 participates in tRNA binding. Catalysis depends on histidine 19, which acts as the Proton acceptor. Tyrosine 64, asparagine 66, and asparagine 112 together coordinate tRNA.

The protein belongs to the PTH family. In terms of assembly, monomer.

It localises to the cytoplasm. The enzyme catalyses an N-acyl-L-alpha-aminoacyl-tRNA + H2O = an N-acyl-L-amino acid + a tRNA + H(+). Functionally, hydrolyzes ribosome-free peptidyl-tRNAs (with 1 or more amino acids incorporated), which drop off the ribosome during protein synthesis, or as a result of ribosome stalling. Its function is as follows. Catalyzes the release of premature peptidyl moieties from peptidyl-tRNA molecules trapped in stalled 50S ribosomal subunits, and thus maintains levels of free tRNAs and 50S ribosomes. The sequence is that of Peptidyl-tRNA hydrolase from Rhodopseudomonas palustris (strain BisB18).